We begin with the raw amino-acid sequence, 452 residues long: Glutamyl-tRNA(Gln) amidotransferase subunit A (452 aa).

Residues Lys56 and Ser131 each act as charge relay system in the active site. Ser155 acts as the Acyl-ester intermediate in catalysis.

This sequence belongs to the amidase family. GatA subfamily. As to quaternary structure, heterotrimer of A, B and C subunits.

The enzyme catalyses L-glutamyl-tRNA(Gln) + L-glutamine + ATP + H2O = L-glutaminyl-tRNA(Gln) + L-glutamate + ADP + phosphate + H(+). Its function is as follows. Allows the formation of correctly charged Gln-tRNA(Gln) through the transamidation of misacylated Glu-tRNA(Gln) in organisms which lack glutaminyl-tRNA synthetase. The reaction takes place in the presence of glutamine and ATP through an activated gamma-phospho-Glu-tRNA(Gln). The chain is Glutamyl-tRNA(Gln) amidotransferase subunit A from Campylobacter curvus (strain 525.92).